The chain runs to 427 residues: Glutamyl-tRNA reductase (427 aa).

Substrate contacts are provided by residues 49 to 52 (TCNR), Ser109, 114 to 116 (EGQ), and Gln120. The active-site Nucleophile is Cys50. Position 188–193 (188–193 (GAGKMA)) interacts with NADP(+).

It belongs to the glutamyl-tRNA reductase family. In terms of assembly, homodimer.

The catalysed reaction is (S)-4-amino-5-oxopentanoate + tRNA(Glu) + NADP(+) = L-glutamyl-tRNA(Glu) + NADPH + H(+). Its pathway is porphyrin-containing compound metabolism; protoporphyrin-IX biosynthesis; 5-aminolevulinate from L-glutamyl-tRNA(Glu): step 1/2. It functions in the pathway porphyrin-containing compound metabolism; chlorophyll biosynthesis. With respect to regulation, feedback inhibition by heme. Functionally, catalyzes the NADPH-dependent reduction of glutamyl-tRNA(Glu) to glutamate 1-semialdehyde (GSA). The polypeptide is Glutamyl-tRNA reductase (Synechocystis sp. (strain ATCC 27184 / PCC 6803 / Kazusa)).